Reading from the N-terminus, the 876-residue chain is Alanine--tRNA ligase (876 aa).

Zn(2+) contacts are provided by histidine 565, histidine 569, cysteine 667, and histidine 671.

It belongs to the class-II aminoacyl-tRNA synthetase family. Zn(2+) is required as a cofactor.

The protein resides in the cytoplasm. It catalyses the reaction tRNA(Ala) + L-alanine + ATP = L-alanyl-tRNA(Ala) + AMP + diphosphate. Its function is as follows. Catalyzes the attachment of alanine to tRNA(Ala) in a two-step reaction: alanine is first activated by ATP to form Ala-AMP and then transferred to the acceptor end of tRNA(Ala). Also edits incorrectly charged Ser-tRNA(Ala) and Gly-tRNA(Ala) via its editing domain. This chain is Alanine--tRNA ligase, found in Desulfosudis oleivorans (strain DSM 6200 / JCM 39069 / Hxd3) (Desulfococcus oleovorans).